We begin with the raw amino-acid sequence, 239 residues long: Serine protease SplF (239 aa).

An N-terminal signal peptide occupies residues 1–36 (MNKNIIIKSIAALTILTSVTGVGTTMVEGIQQTAKA). Catalysis depends on charge relay system residues histidine 75, aspartate 114, and serine 192.

The protein belongs to the peptidase S1B family.

The protein resides in the secreted. The chain is Serine protease SplF (splF) from Staphylococcus aureus (strain Mu50 / ATCC 700699).